A 62-amino-acid chain; its full sequence is Protein gp45.2 (62 aa).

Functionally, may participate in replication-dependent transcriptional events during viral growth. The chain is Protein gp45.2 (45.2) from Escherichia coli (Bacteriophage T4).